Here is a 101-residue protein sequence, read N- to C-terminus: Small ribosomal subunit protein uS14A (101 aa).

It belongs to the universal ribosomal protein uS14 family. In terms of assembly, part of the 30S ribosomal subunit. Contacts proteins S3 and S10.

Its function is as follows. Binds 16S rRNA, required for the assembly of 30S particles and may also be responsible for determining the conformation of the 16S rRNA at the A site. This is Small ribosomal subunit protein uS14A from Mycolicibacterium smegmatis (strain ATCC 700084 / mc(2)155) (Mycobacterium smegmatis).